A 193-amino-acid chain; its full sequence is tRNA(Phe) 7-((3-amino-3-carboxypropyl)-4-demethylwyosine(37)-N(4))-methyltransferase (193 aa).

This sequence belongs to the TYW3 family.

The catalysed reaction is 4-demethyl-7-[(3S)-3-amino-3-carboxypropyl]wyosine(37) in tRNA(Phe) + S-adenosyl-L-methionine = 7-[(3S)-3-amino-3-carboxypropyl]wyosine(37) in tRNA(Phe) + S-adenosyl-L-homocysteine + H(+). Functionally, S-adenosyl-L-methionine-dependent methyltransferase that acts as a component of the wyosine derivatives biosynthesis pathway. Probably methylates N-4 position of wybutosine-86 to produce wybutosine-72. In Methanocaldococcus jannaschii (strain ATCC 43067 / DSM 2661 / JAL-1 / JCM 10045 / NBRC 100440) (Methanococcus jannaschii), this protein is tRNA(Phe) 7-((3-amino-3-carboxypropyl)-4-demethylwyosine(37)-N(4))-methyltransferase.